A 185-amino-acid polypeptide reads, in one-letter code: CD160 antigen (185 aa).

The signal sequence occupies residues 1–27 (MQRILMAPGQSCCALAILLAIVNFQHG). An Ig-like V-type domain is found at 28 to 136 (GCIHVTSSAS…HGHFLSVLVT (109 aa)). Intrachain disulfides connect C47-C115 and C64-C71. N-linked (GlcNAc...) asparagine glycans are attached at residues N138 and N156. S160 carries GPI-anchor amidated serine lipidation. A propeptide spans 161–185 (SGFLQVKAWGMLVTSLVALQALYTL) (removed in mature form).

Homomultimer; disulfide-linked. Interacts with classical and non-classical MHC class I molecules. Interacts with TNFRSF14 (via cysteine-rich domain 1); this interaction is direct. Interacts with LCK and CD247/CD3 zeta chain. In terms of tissue distribution, expressed in resting and activated NK cell subsets (at protein level). Expressed in resting NKT cells (at protein level). Expressed in activated CD8+ T cells (at protein level). Highly expressed in intraepithelial lymphocyte (IEL) subsets, particularly in innate-like CD8A-positive IELs (at protein level).

The protein resides in the cell membrane. The protein localises to the secreted. In terms of biological role, receptor on immune cells capable to deliver stimulatory or inhibitory signals that regulate cell activation and differentiation. Exists as a GPI-anchored and as a transmembrane form, each likely initiating distinct signaling pathways via phosphoinositol 3-kinase in activated NK cells and via LCK and CD247/CD3 zeta chain in activated T cells. Receptor for both classical and non-classical MHC class I molecules. Receptor or ligand for TNF superfamily member TNFRSF14, participating in bidirectional cell-cell contact signaling between antigen presenting cells and lymphocytes. Upon ligation of TNFRSF14, provides stimulatory signal to NK cells enhancing IFNG production and anti-tumor immune response. On activated CD4+ T cells, interacts with TNFRSF14 and down-regulates CD28 costimulatory signaling, restricting memory and alloantigen-specific immune response. In the context of bacterial infection, acts as a ligand for TNFRSF14 on epithelial cells, triggering the production of antimicrobial proteins and pro-inflammatory cytokines. The soluble GPI-cleaved form, usually released by activated lymphocytes, might play an immune regulatory role by limiting lymphocyte effector functions. The polypeptide is CD160 antigen (Mus musculus (Mouse)).